Consider the following 154-residue polypeptide: Endoribonuclease YbeY (154 aa).

Residues H114, H118, and H124 each coordinate Zn(2+).

Belongs to the endoribonuclease YbeY family. Zn(2+) is required as a cofactor.

It localises to the cytoplasm. Single strand-specific metallo-endoribonuclease involved in late-stage 70S ribosome quality control and in maturation of the 3' terminus of the 16S rRNA. The polypeptide is Endoribonuclease YbeY (Haemophilus influenzae (strain PittEE)).